Consider the following 395-residue polypeptide: MSANATLKPLCPILEQMSRLQSHSNTSIRYIDHAAVLLHGLASLLGLVENGVILFVVGCRMRQTVVTTWVLHLALSDLLASASLPFFTYFLAVGHSWELGTTFCKLHSSIFFLNMFASGFLLSAISLDRCLQVVRPVWAQNHRTVAAAHKVCLVLWALAVLNTVPYFVFRDTISRLDGRIMCYYNVLLLNPGPDRDATCNSRQVALAVSKFLLAFLVPLAIIASSHAAVSLRLQHRGRRRPGRFVRLVAAVVAAFALCWGPYHVFSLLEARAHANPGLRPLVWRGLPFVTSLAFFNSVANPVLYVLTCPDMLRKLRRSLRTVLESVLVDDSELGGAGSSRRRRTSSTARSASPLALCSRPEEPRGPARLLGWLLGSCAASPQTGPLNRALSSTSS.

Residues 1–33 (MSANATLKPLCPILEQMSRLQSHSNTSIRYIDH) lie on the Extracellular side of the membrane. 2 N-linked (GlcNAc...) asparagine glycosylation sites follow: N4 and N25. Residues 34–56 (AAVLLHGLASLLGLVENGVILFV) form a helical membrane-spanning segment. Over 57–67 (VGCRMRQTVVT) the chain is Cytoplasmic. The chain crosses the membrane as a helical span at residues 68–89 (TWVLHLALSDLLASASLPFFTY). The Extracellular segment spans residues 90 to 106 (FLAVGHSWELGTTFCKL). Cysteines 104 and 182 form a disulfide. The chain crosses the membrane as a helical span at residues 107 to 127 (HSSIFFLNMFASGFLLSAISL). At 128 to 146 (DRCLQVVRPVWAQNHRTVA) the chain is on the cytoplasmic side. Residues 147–168 (AAHKVCLVLWALAVLNTVPYFV) traverse the membrane as a helical segment. Over 169 to 210 (FRDTISRLDGRIMCYYNVLLLNPGPDRDATCNSRQVALAVSK) the chain is Extracellular. Residues 211–231 (FLLAFLVPLAIIASSHAAVSL) traverse the membrane as a helical segment. Residues 232-247 (RLQHRGRRRPGRFVRL) lie on the Cytoplasmic side of the membrane. The chain crosses the membrane as a helical span at residues 248–269 (VAAVVAAFALCWGPYHVFSLLE). The Extracellular segment spans residues 270–288 (ARAHANPGLRPLVWRGLPF). A helical membrane pass occupies residues 289-308 (VTSLAFFNSVANPVLYVLTC). The Cytoplasmic portion of the chain corresponds to 309 to 395 (PDMLRKLRRS…LNRALSSTSS (87 aa)). The short motif at 330–333 (DSEL) is the Involved in the recycling of CRTH2 element. Phosphoserine occurs at positions 331 and 345. A disordered region spans residues 333–363 (LGGAGSSRRRRTSSTARSASPLALCSRPEEP).

The protein belongs to the G-protein coupled receptor 1 family. Phosphorylated. In terms of tissue distribution, widespread expression. High expression in stomach, small intestine, heart and thymus. Intermediate expression in colon, spinal cord and peripheral blood and low expression in brain, skeletal muscle and spleen. Expressed also on Th2- and Tc2- type cells, eosinophils and basophils.

It is found in the cell membrane. Receptor for prostaglandin D2 (PGD2). Coupled to the G(i)-protein. Receptor activation may result in pertussis toxin-sensitive decreases in cAMP levels and Ca(2+) mobilization. PI3K signaling is also implicated in mediating PTGDR2 effects. PGD2 induced receptor internalization. CRTH2 internalization can be regulated by diverse kinases such as, PKC, PKA, GRK2, GPRK5/GRK5 and GRK6. Receptor activation is responsible, at least in part, in immune regulation and allergic/inflammation responses. The sequence is that of Prostaglandin D2 receptor 2 (PTGDR2) from Homo sapiens (Human).